The following is a 123-amino-acid chain: Small ribosomal subunit protein uS12 (123 aa).

Aspartate 89 is modified (3-methylthioaspartic acid).

The protein belongs to the universal ribosomal protein uS12 family. In terms of assembly, part of the 30S ribosomal subunit. Contacts proteins S8 and S17. May interact with IF1 in the 30S initiation complex.

Its function is as follows. With S4 and S5 plays an important role in translational accuracy. In terms of biological role, interacts with and stabilizes bases of the 16S rRNA that are involved in tRNA selection in the A site and with the mRNA backbone. Located at the interface of the 30S and 50S subunits, it traverses the body of the 30S subunit contacting proteins on the other side and probably holding the rRNA structure together. The combined cluster of proteins S8, S12 and S17 appears to hold together the shoulder and platform of the 30S subunit. In Trichlorobacter lovleyi (strain ATCC BAA-1151 / DSM 17278 / SZ) (Geobacter lovleyi), this protein is Small ribosomal subunit protein uS12.